Here is a 315-residue protein sequence, read N- to C-terminus: Tyrosine recombinase XerC (315 aa).

The Core-binding (CB) domain maps to 13 to 104 (ADLAAAREEW…GVRSLLRHLE (92 aa)). The Tyr recombinase domain occupies 125–309 (SLPKPLTADD…DTQRLLEVYD (185 aa)). Active-site residues include Arg-168, Lys-193, His-261, Arg-264, and His-287. Residue Tyr-296 is the O-(3'-phospho-DNA)-tyrosine intermediate of the active site.

The protein belongs to the 'phage' integrase family. XerC subfamily. As to quaternary structure, forms a cyclic heterotetrameric complex composed of two molecules of XerC and two molecules of XerD.

The protein resides in the cytoplasm. Site-specific tyrosine recombinase, which acts by catalyzing the cutting and rejoining of the recombining DNA molecules. The XerC-XerD complex is essential to convert dimers of the bacterial chromosome into monomers to permit their segregation at cell division. It also contributes to the segregational stability of plasmids. In Brucella suis biovar 1 (strain 1330), this protein is Tyrosine recombinase XerC.